The chain runs to 101 residues: Small nuclear ribonucleoprotein Sm D3 (101 aa).

The Sm domain maps to 6-78 (IPVKLLNEAQ…IKFIVVPDLL (73 aa)).

It belongs to the snRNP core protein family. In terms of assembly, component of the Sm core complex, present in spliceosomal snRNP U1, U2, U4/U6 and U5. The core complex contains SMB1, SMD1, SMD2, SMD3, SME1, SMX3 and SMX2 (Sm proteins B, D1, D2, D3, E, F and G, respectively), and is probably a heptameric ring structure. SMD3 specifically interacts with SMB1. Belongs to the CWC complex (or CEF1-associated complex), a spliceosome sub-complex reminiscent of a late-stage spliceosome composed of the U2, U5 and U6 snRNAs and at least BUD13, BUD31, BRR2, CDC40, CEF1, CLF1, CUS1, CWC2, CWC15, CWC21, CWC22, CWC23, CWC24, CWC25, CWC27, ECM2, HSH155, IST3, ISY1, LEA1, MSL1, NTC20, PRP8, PRP9, PRP11, PRP19, PRP21, PRP22, PRP45, PRP46, SLU7, SMB1, SMD1, SMD2, SMD3, SMX2, SMX3, SNT309, SNU114, SPP2, SYF1, SYF2, RSE1 and YJU2. Component of the U4/U6-U5 tri-snRNP complex composed of the U4, U6 and U5 snRNAs and at least PRP3, PRP4, PRP6, PRP8, PRP18, PRP31, PRP38, SNU13, SNU23, SNU66, SNU114, SPP381, SMB1, SMD1, SMD2, SMD3, SMX2, SMX3, LSM2, LSM3, LSM4, LSM5, LSM6, LSM7, LSM8, BRR2 and DIB1.

Its subcellular location is the cytoplasm. The protein resides in the cytosol. It localises to the nucleus. In terms of biological role, plays a role in pre-mRNA splicing as a core component of the spliceosomal U1, U2, U4 and U5 small nuclear ribonucleoproteins (snRNPs), the building blocks of the spliceosome. Also binds telomerase RNA and is required for its accumulation. This Saccharomyces cerevisiae (strain ATCC 204508 / S288c) (Baker's yeast) protein is Small nuclear ribonucleoprotein Sm D3 (SMD3).